Consider the following 275-residue polypeptide: MENTENSVDSKSIKTSETKILHGSKSMDSGISLEESYKMDYPEMGLCIIINNKNFHENTGMACRSGTDVDAANLRETFMNLKYEVRIKNDLTCKEMLELMSNVSKEDHSKRSSFICVLLSHGEEGIIFGTNGPVNLKKLASFFRGDYCRSLTGKPKLFIIQACRGTELDCGIETDSGAEDDMACQKIPVEADFLYAYSTAPGYFSWRNAKNGSWFIQALCEMLKKHAHRLELMHILTRVNRKVAIEYESFSTDSAFHAKKQIPCIMSMLTKELYF.

The residue at position 1 (Met1) is an N-acetylmethionine. 2 consecutive propeptides follow at residues 1–9 and 10–28; these read MENTENSVD and SKSI…KSMD. N6-acetyllysine is present on Lys11. Ser26 carries the post-translational modification Phosphoserine. Residues His121 and Cys163 contribute to the active site. An S-nitrosocysteine; in inhibited form modification is found at Cys163.

The protein belongs to the peptidase C14A family. In terms of assembly, heterotetramer that consists of two anti-parallel arranged heterodimers, each one formed by a 17 kDa (p17) and a 12 kDa (p12) subunit. Interacts with BIRC6/bruce. Cleavage by granzyme B, caspase-6, caspase-8 and caspase-10 generates the two active subunits. Additional processing of the propeptides is likely due to the autocatalytic activity of the activated protease. Active heterodimers between the small subunit of caspase-7 protease and the large subunit of caspase-3 also occur and vice versa. Post-translationally, S-nitrosylated on its catalytic site cysteine in unstimulated cell lines and denitrosylated upon activation of the Fas apoptotic pathway, associated with an increase in intracellular caspase activity. Fas therefore activates caspase-3 not only by inducing the cleavage of the caspase zymogen to its active subunits, but also by stimulating the denitrosylation of its active site thiol. In terms of processing, ubiquitinated by BIRC6; this activity is inhibited by DIABLO/SMAC.

The protein resides in the cytoplasm. It catalyses the reaction Strict requirement for an Asp residue at positions P1 and P4. It has a preferred cleavage sequence of Asp-Xaa-Xaa-Asp-|- with a hydrophobic amino-acid residue at P2 and a hydrophilic amino-acid residue at P3, although Val or Ala are also accepted at this position.. With respect to regulation, inhibited by BIRC6; following inhibition of BIRC6-caspase binding by DIABLO/SMAC, BIRC6 is subjected to caspase cleavage, leading to an increase in active caspases. Functionally, involved in the activation cascade of caspases responsible for apoptosis execution. At the onset of apoptosis, it proteolytically cleaves poly(ADP-ribose) polymerase PARP1 at a '216-Asp-|-Gly-217' bond. Cleaves and activates sterol regulatory element binding proteins (SREBPs) between the basic helix-loop-helix leucine zipper domain and the membrane attachment domain. Cleaves and activates caspase-6, -7 and -9 (CASP6, CASP7 and CASP9, respectively). Cleaves and inactivates interleukin-18 (IL18). Triggers cell adhesion in sympathetic neurons through RET cleavage. Cleaves IL-1 beta between an Asp and an Ala, releasing the mature cytokine which is involved in a variety of inflammatory processes. Cleaves and inhibits serine/threonine-protein kinase AKT1 in response to oxidative stress. Acts as an inhibitor of type I interferon production during virus-induced apoptosis by mediating cleavage of antiviral proteins CGAS, IRF3 and MAVS, thereby preventing cytokine overproduction. Also involved in pyroptosis by mediating cleavage and activation of gasdermin-E (GSDME). Cleaves XRCC4 and phospholipid scramblase proteins XKR4, XKR8 and XKR9, leading to promote phosphatidylserine exposure on apoptotic cell surface. Cleaves BIRC6 following inhibition of BIRC6-caspase binding by DIABLO/SMAC. This is Caspase-3 (CASP3) from Bos taurus (Bovine).